Consider the following 192-residue polypeptide: Thymidine kinase (192 aa).

Residues 9 to 16 (SAMNAGKS) and 87 to 90 (DECQ) contribute to the ATP site. Residue Glu88 is the Proton acceptor of the active site. Positions 145, 147, 182, and 185 each coordinate Zn(2+).

Belongs to the thymidine kinase family. As to quaternary structure, homotetramer.

The protein localises to the cytoplasm. It carries out the reaction thymidine + ATP = dTMP + ADP + H(+). In Vibrio cholerae serotype O1 (strain ATCC 39315 / El Tor Inaba N16961), this protein is Thymidine kinase.